An 856-amino-acid chain; its full sequence is DNA mismatch repair protein MutS (856 aa).

618–625 (GPNMGGKS) serves as a coordination point for ATP.

Belongs to the DNA mismatch repair MutS family.

This protein is involved in the repair of mismatches in DNA. It is possible that it carries out the mismatch recognition step. This protein has a weak ATPase activity. This chain is DNA mismatch repair protein MutS, found in Shewanella baltica (strain OS195).